Consider the following 338-residue polypeptide: Photosystem II assembly lipoprotein Ycf48 (338 aa).

The N-terminal stretch at M1–S23 is a signal peptide. Residue C24 is the site of N-palmitoyl cysteine attachment. C24 is lipidated: S-diacylglycerol cysteine.

It belongs to the Ycf48 family. In terms of assembly, part of early PSII assembly complexes which includes D1 (psbA) and PsbI; not found in mature PSII. Binds to the lumenal side of PSII complexes. Interacts with YidC.

It localises to the cellular thylakoid membrane. A factor required for optimal assembly of photosystem II (PSII), acting in the early stages of PSII assembly. Also plays a role in replacement of photodamaged D1 (psbA). Assists YidC in synthesis of chlorophyll-binding proteins. The sequence is that of Photosystem II assembly lipoprotein Ycf48 from Prochlorococcus marinus (strain MIT 9312).